The sequence spans 146 residues: MORN repeat-containing protein 4 (146 aa).

MORN repeat units follow at residues 16–38 (YRGEWKEGRRHGFGQLMFADGGT), 39–61 (YLGHFENGLFNGFGVLTFSDGSR), 62–84 (YEGEFAQGKFNGVGVFIRYDNMT), and 85–107 (FEGEFKNGRVDGFGLLTFPDGSH).

In terms of assembly, interacts with MYO3A.

The protein resides in the cytoplasm. It is found in the cell projection. It localises to the filopodium tip. Its subcellular location is the stereocilium. In terms of biological role, plays a role in promoting axonal degeneration following neuronal injury by toxic insult or trauma. This Homo sapiens (Human) protein is MORN repeat-containing protein 4 (MORN4).